The following is a 359-amino-acid chain: Putative nucleotidyltransferase MAB21L1 (359 aa).

Residues 23–24 (RK) and 63–66 (YEGL) each bind a ribonucleoside 5'-triphosphate. Residues glutamate 73 and glutamate 75 each contribute to the Mg(2+) site. A ribonucleoside 5'-triphosphate is bound by residues lysine 248 and 252–255 (SILK).

Belongs to the mab-21 family. As to quaternary structure, monomer. Homodecamer; composed of 2 back to back homopentamers. The protein may exist as monomer in solution and oiligomerizes upon ligand binding.

It is found in the nucleus. In terms of biological role, putative nucleotidyltransferase required for several aspects of embryonic development including normal development of the eye. It is unclear whether it displays nucleotidyltransferase activity in vivo. Binds single-stranded RNA (ssRNA). This chain is Putative nucleotidyltransferase MAB21L1 (MAB21L1), found in Bos taurus (Bovine).